The sequence spans 519 residues: MAGPPALPPPETAAAATTAAAASSSAASPHYQEWILDTIDSLRSRKARPDLERICRMVRRRHGPEPERTRAELEKLIQQRAVLRVSYKGSISYRNAARVQPPRRGATPPAPPRVPRGGPAAPPPTPAPPPAPVAAPTRAPRAAAATAPPSPGPAQPGPRAQRAAPLAAPPPAPAAPPAAAPPAGPRRAPPPAVAAREPPAPPQQQQPPPPQPQPPPEGGAARAGGPARPVSLREVVRYLGGSGGASGRLTRGRVQGLLEEEAARGRLERTRLGALALPRGDRPGRAPPAASARAARSKRGGEERVFEKEEEDEDEDEEEEEEDNVSEGSEVPESDRPAGAQHHQINGERGPQSAKERVKEWSPCGPYQGQDEGRGPAPGSCTRQVFPMTAVNKEGGSACVGAAPDSPSPVPLPPGKPALPGADGTPFGCPPGRKEKPTDPVEWTVMDVVEYFTEAGFPEQATAFQEQEIDGKSLLLMQRTDVLTGLSIRLGPALKIYEHHIKVLQQGHFEDDDPDGLLG.

Over residues 1–11 (MAGPPALPPPE) the composition is skewed to pro residues. Disordered stretches follow at residues 1–30 (MAGP…ASPH) and 87–232 (YKGS…PVSL). A compositionally biased stretch (low complexity) spans 12-29 (TAAAATTAAAASSSAASP). An SAMD1-like winged helix (WH) domain is found at 23-99 (SSSAASPHYQ…SISYRNAARV (77 aa)). Phosphothreonine is present on threonine 107. Over residues 108–133 (PPAPPRVPRGGPAAPPPTPAPPPAPV) the composition is skewed to pro residues. A compositionally biased stretch (low complexity) spans 134–147 (AAPTRAPRAAAATA). Phosphoserine is present on serine 150. Low complexity predominate over residues 157-166 (GPRAQRAAPL). Positions 167–217 (AAPPPAPAAPPAAAPPAGPRRAPPPAVAAREPPAPPQQQQPPPPQPQPPPE) are enriched in pro residues. The segment covering 218 to 230 (GGAARAGGPARPV) has biased composition (low complexity). Serine 242 carries the phosphoserine modification. Residues 261 to 271 (EAARGRLERTR) are compositionally biased toward basic and acidic residues. 2 disordered regions span residues 261 to 381 (EAAR…PGSC) and 417 to 439 (PALP…KPTD). Over residues 308–325 (KEEEDEDEDEEEEEEDNV) the composition is skewed to acidic residues. An SAM domain is found at 443 to 511 (WTVMDVVEYF…KVLQQGHFED (69 aa)).

In terms of assembly, homopolymerize into a closed pentameric ring. Interacts (via SAM domain) with L3MBTL3 (via SAM domain); the interaction mediates L3MBTL3 binding to chromatin. Interacts (via WH domain) with KDM1A; the interaction modulates KDM1A function. Expressed to similar levels in different organs. Expressed at higher levels in bone marrow, osteoclasts and spleen. Expressed in vascular smooth muscle cells.

It localises to the nucleus. The protein resides in the chromosome. It is found in the secreted. Functionally, unmethylated CpG islands (CGIs)-binding protein which localizes to H3K4me3-decorated CGIs, where it acts as a transcriptional repressor. Tethers L3MBTL3 to chromatin and interacts with the KDM1A histone demethylase complex to modulate H3K4me2 and H3K4me3 levels at CGIs. Plays a role in atherogenesis by binding with LDL on cell surface and promoting LDL oxidation which leads to the formation of foam cell. In Mus musculus (Mouse), this protein is Sterile alpha motif domain-containing protein 1.